Consider the following 732-residue polypeptide: MSEQSRCPVTGRTADSPATGSGLSNRDWWPNQLHLDMLHQHSSLVNPMGEGFRYKEEFGKLDLKEVKKDLYALMTDSQEWWPADYGHYGGLFIRMAWHSAGTYRTSDGRGGGGTGNQRFAPLNSWPDNANLDKARRLLWPIKQKYGKKISWADLMILAGNCALESMGFKTFGFGGGRVDIWEPEEDIYWGKEVEWLGNKRYSGERDLENPLAAVQMGLIYVNPEGPDGKPDPVAAGRDIRETFARMAMNDEETVALVAGGHTFGKCHGVGDPKLVGPEPEAADIEEQGLGWKSGYGIGKGDETMTSGLEGAWTPDPIHWDMGYLGMLFRYEWELTKSPAGAWQWKPKDVAEEDLAPAAHDPSKRVPTMMTTADLAMRMDPIYGPISQRYYEHPDQFADAFARAWFKLTHRDMGPHSRYLGAEVPAEELIWQDPVPALDHDLIDAEEIAELKKRLLASGLSIPELVSTAWASASTFRGSDKRGGANGARIRLAPQKDWEVNQPEQLQRVLHKLEEIRNTFNGEQSGNKQVSLADMIVLGGCAAVEEAAGKAGTGVTVPFTPGRTDALQEQTDTESFSVLEPLADGFRNYMKKKYSVSAEEMLVDRSQLLTLTAPEMTVLLGGLRVLGANFQQSPHGVFTTQPETLTNDYFVNLLDMGTEWKPLSKEQDTFEGRDRKTGEPRWTATRVDLIFGSNSRLRAIAEVYGSDDAQEKFVHDFVAAWDKVMNLDRFDLG.

Residues 1–23 (MSEQSRCPVTGRTADSPATGSGL) are disordered. The segment at residues 97-220 (WHSAGTYRTS…LAAVQMGLIY (124 aa)) is a cross-link (tryptophyl-tyrosyl-methioninium (Trp-Tyr) (with M-246)). His-98 acts as the Proton acceptor in catalysis. The segment at residues 220–246 (YVNPEGPDGKPDPVAAGRDIRETFARM) is a cross-link (tryptophyl-tyrosyl-methioninium (Tyr-Met) (with W-97)). His-261 is a binding site for heme b.

The protein belongs to the peroxidase family. Peroxidase/catalase subfamily. In terms of assembly, homodimer or homotetramer. Heme b serves as cofactor. In terms of processing, formation of the three residue Trp-Tyr-Met cross-link is important for the catalase, but not the peroxidase activity of the enzyme.

The catalysed reaction is H2O2 + AH2 = A + 2 H2O. It catalyses the reaction 2 H2O2 = O2 + 2 H2O. In terms of biological role, bifunctional enzyme with both catalase and broad-spectrum peroxidase activity. This chain is Catalase-peroxidase, found in Prosthecochloris aestuarii (strain DSM 271 / SK 413).